Reading from the N-terminus, the 471-residue chain is Heat shock 70 kDa protein 13 (471 aa).

Residues 1–22 form the signal peptide; sequence MAREMTILGSAVLTLLLAGYLA. The segment at 314-352 is disordered; the sequence is EEQDRKEPHSSDTELPKDKLSSADDHRVNSGFGRGLSDK. Positions 315–341 are enriched in basic and acidic residues; the sequence is EQDRKEPHSSDTELPKDKLSSADDHRV.

The protein belongs to the heat shock protein 70 family. As to quaternary structure, binds UBQLN2.

It is found in the microsome. Its subcellular location is the endoplasmic reticulum. Functionally, has peptide-independent ATPase activity. This chain is Heat shock 70 kDa protein 13 (HSPA13), found in Pongo abelii (Sumatran orangutan).